We begin with the raw amino-acid sequence, 203 residues long: Large ribosomal subunit protein uL13 (203 aa).

A2 carries the post-translational modification N-acetylalanine. The residue at position 59 (R59) is a Citrulline. S77 is modified (phosphoserine). Position 140 is a citrulline (R140). Position 191 is an N6-acetyllysine (K191).

Belongs to the universal ribosomal protein uL13 family. As to quaternary structure, component of the 60S ribosome. Component of the GAIT complex. Interacts with EIF4G1. Post-translationally, phosphorylation at Ser-77 upon interferon-gamma treatment in macrophages involves a DAPK1-DAPK3 kinase cascade and is causing release from the ribosome, association with the GAIT complex and subsequent involvement in transcript-selective translation inhibition. Citrullinated by PADI4.

The protein resides in the cytoplasm. Its function is as follows. Associated with ribosomes but is not required for canonical ribosome function and has extra-ribosomal functions. Component of the GAIT (gamma interferon-activated inhibitor of translation) complex which mediates interferon-gamma-induced transcript-selective translation inhibition in inflammation processes. Upon interferon-gamma activation and subsequent phosphorylation dissociates from the ribosome and assembles into the GAIT complex which binds to stem loop-containing GAIT elements in the 3'-UTR of diverse inflammatory mRNAs (such as ceruplasmin) and suppresses their translation. In the GAIT complex interacts with m7G cap-bound eIF4G at or near the eIF3-binding site and blocks the recruitment of the 43S ribosomal complex. Involved in methylation of rRNA. The chain is Large ribosomal subunit protein uL13 (RPL13A) from Bos taurus (Bovine).